The primary structure comprises 436 residues: Drebrin-like protein (436 aa).

Residues 2 to 133 (AVNLSRNGPA…EPECIMEKVA (132 aa)) enclose the ADF-H domain. At threonine 26 the chain carries Phosphothreonine. At serine 160 the chain carries Phosphoserine. Position 176 is an N6-acetyllysine (lysine 176). Residues 178–232 (NFWAKAEKEEENRRLEEKRRAEEEKQRLEEERRERELQEAARREQRYQEQHRSAG) are a coiled coil. 2 stretches are compositionally biased toward basic and acidic residues: residues 185–229 (KEEE…EQHR) and 264–275 (HPREIFKQKERA). Positions 185–371 (KEEENRRLEE…GSGHIDNYMQ (187 aa)) are disordered. A compositionally biased stretch (polar residues) spans 276 to 286 (MSTTSVSSSQP). Phosphoserine is present on residues serine 277, serine 280, serine 283, and serine 291. Lysine 296 carries the post-translational modification N6-acetyllysine. Threonine 299 carries the post-translational modification Phosphothreonine. Serine 311 bears the Phosphoserine mark. A phosphotyrosine mark is found at tyrosine 340 and tyrosine 350. The 60-residue stretch at 377-436 (GQGLCARALYDYQAADDTEISFDPENLITGIEVIDEGWWRGYGPDGHFGMFPANYVELIE) folds into the SH3 domain.

It belongs to the ABP1 family. Interacts with FGD1, MAP4K1 and PRAM1. Interacts with ANKRD54. Interacts with WASL and WIPF1. Interacts with SHANK2 and SHANK3. Interacts with both COBL and PACSIN1. Interacts with DNM1 and SYN1. In terms of tissue distribution, detected in brain (at protein level). Widely expressed in brain with highest levels in hippocampus and cerebral cortex. Located primarily in dendrites and, in moderate amounts, in cell bodies. Isoform 1 and isoform 3 are the predominant isoforms in brain.

It localises to the cytoplasm. Its subcellular location is the cytoskeleton. The protein localises to the cell projection. It is found in the lamellipodium. The protein resides in the ruffle. It localises to the cell cortex. Its subcellular location is the cytosol. The protein localises to the cell membrane. It is found in the synapse. The protein resides in the perikaryon. It localises to the neuron projection. Its subcellular location is the dendrite. The protein localises to the postsynaptic density. It is found in the golgi apparatus membrane. The protein resides in the cytoplasmic vesicle. It localises to the clathrin-coated vesicle membrane. Its subcellular location is the podosome. The protein localises to the early endosome. Functionally, adapter protein that binds F-actin and DNM1, and thereby plays a role in receptor-mediated endocytosis. Required for the formation of organized podosome rosettes. May act as a common effector of antigen receptor-signaling pathways in leukocytes. Acts as a key component of the immunological synapse that regulates T-cell activation by bridging TCRs and the actin cytoskeleton to gene activation and endocytic processes. Plays a role in the reorganization of the actin cytoskeleton, formation of cell projections, such as neurites, in neuron morphogenesis and synapse formation via its interaction with WASL and COBL. Does not bind G-actin and promote actin polymerization by itself. This Rattus norvegicus (Rat) protein is Drebrin-like protein.